The following is a 1163-amino-acid chain: MDLFNFDAIKISLASPEKIREWSRGEVKKPETINYRTLKPEKDGLFCEKIFGPTKDWECHCGKYKKVKYKGVVCDKCGVEVTKSKVRRERMGHIELAAPVSHIWYFKGVPSRMGLILDMTPRNLEKVLYFAAYVVIDPGDVPNLEKKQILSEKEYRELKEKYGDRFRAGMGAEAIKELLKEIDLDKLSQELRQELETATGQKKLKIIKRLEVVEAFRKSGNRPEWMILDVIPVIPPELRPMVQLDGGRFATSDLNDLYRRVINRNNRLKKLMELGAPDIIIRNEKRMLQEAVDALIDNGRRGRPVTGPGNRPLKSLSDMLKGKQGRFRQNLLGKRVDYSGRSVIVVGPELKIYQCGLPKEMALELFKPFVMKKLVEKGICNNIKNAKKAVERQRSEVWDILEEVIKDHPVLLNRAPTLHRLGIQAFEPVLVEGRAIRLHPLVCTAYNADFDGDQMAVHVPLSAEAQAEARFLMLSANNLLKPADGKPIVVPTQDMVLGIYYLTLEKKGDKGEGKIFSSEDEALLAYEHKVVGLHARIKVRRTIEKDGEVVSGIVETTPGKIILNQVIPQDLGFVDRSKKENLLKYEIDTLVDKKMLGKIIDRCIKVYGTTRTAEILDEIKELGFRFSTRGAITISVSDMVIPEVKQKLIAEAEQKVENIEKLYRHGLISDEERYEQVISIWNETKDKLTEELIQNLDEFNPIFMMASSGARGSKNQISQLAGMRGLMANPSGKTIEMPIKSNFREGLNVIEFFISTHGARKGLADTALRTADSGYLTRRLVDVAQDIIVREEDCGTEKGIEVSEIRDGTEVIETLEERIIGRYAAKDIINEKTGEVIVKRNELITEEIAKKIVDAGEKSVYVRSVLECKTRYGVCTKCYGLDLGTGQPVNVGEAVGIIAAQAIGEPGTQLTMRTFHTGGIAGQDITQGLPRVEELFEARKPKGVAIISEIEGYVSIKEDKKRTITVRNDNGEERTYEVPYGARLKVNDGDYVKAGDELTEGSINPHDLLRIKGPRGVQSYLLAEVQKVYKMQGVDINDKHIEIIIRQMMKKVKIEDPGDTELLPGDIVEIYRFEEENDRAIAEGKRPALGRRVLLGITKAALSTESFLSAASFQETTRVLTDAAIKGKVDPLIGLKENVIIGKLIPAGTGMAKYRNIIVEEKA.

The Zn(2+) site is built by Cys-59, Cys-61, Cys-74, and Cys-77. Mg(2+)-binding residues include Asp-449, Asp-451, and Asp-453. Positions 794, 868, 875, and 878 each coordinate Zn(2+).

Belongs to the RNA polymerase beta' chain family. As to quaternary structure, the RNAP catalytic core consists of 2 alpha, 1 beta, 1 beta' and 1 omega subunit. When a sigma factor is associated with the core the holoenzyme is formed, which can initiate transcription. The cofactor is Mg(2+). It depends on Zn(2+) as a cofactor.

The catalysed reaction is RNA(n) + a ribonucleoside 5'-triphosphate = RNA(n+1) + diphosphate. In terms of biological role, DNA-dependent RNA polymerase catalyzes the transcription of DNA into RNA using the four ribonucleoside triphosphates as substrates. The polypeptide is DNA-directed RNA polymerase subunit beta' (Caldicellulosiruptor saccharolyticus (strain ATCC 43494 / DSM 8903 / Tp8T 6331)).